Consider the following 365-residue polypeptide: Sulfate/thiosulfate import ATP-binding protein CysA (365 aa).

The ABC transporter domain maps to 3–237 (IEIANIKKSF…PATRFVLEFM (235 aa)). Position 35–42 (35–42 (GPSGSGKT)) interacts with ATP.

Belongs to the ABC transporter superfamily. Sulfate/tungstate importer (TC 3.A.1.6) family. As to quaternary structure, the complex is composed of two ATP-binding proteins (CysA), two transmembrane proteins (CysT and CysW) and a solute-binding protein (CysP).

The protein localises to the cell inner membrane. The enzyme catalyses sulfate(out) + ATP + H2O = sulfate(in) + ADP + phosphate + H(+). It catalyses the reaction thiosulfate(out) + ATP + H2O = thiosulfate(in) + ADP + phosphate + H(+). In terms of biological role, part of the ABC transporter complex CysAWTP involved in sulfate/thiosulfate import. Responsible for energy coupling to the transport system. The protein is Sulfate/thiosulfate import ATP-binding protein CysA of Escherichia coli (strain K12).